An 807-amino-acid polypeptide reads, in one-letter code: Oxysterol-binding protein 1 (807 aa).

The residue at position 2 (Ala-2) is an N-acetylalanine. A disordered region spans residues 61–86 (GAGGVAAAGPAPAPPTGGSGGSGAGG). Gly residues predominate over residues 77–86 (GGSGGSGAGG). In terms of domain architecture, PH spans 88–181 (GSAREGWLFK…WVTALELAKA (94 aa)). An a 1,2-diacyl-sn-glycero-3-phospho-(1D-myo-inositol 4-phosphate)-binding site is contributed by 117 to 122 (LSYYRS). Residues Ser-190, Ser-193, Ser-198, Ser-238, and Ser-240 each carry the phosphoserine modification. Positions 291 to 326 (QKSLQYERDQRIRLEETLEQLAKQHNHLERAFRGAT) form a coiled coil. Residue Gln-314 participates in 20-hydroxycholesterol binding. Gln-314 contributes to the 25-hydroxycholesterol binding site. 7beta-hydroxycholesterol is bound at residue Gln-314. Gln-314 contacts cholesterol. Position 314 (Gln-314) interacts with ergosterol. A disordered region spans residues 329-353 (PANTPGNVGSGKDQCCSGKGDMSDE). A phosphoserine mark is found at Ser-338, Ser-345, and Ser-351. Positions 358–364 (EFFDAPE) match the FFAT motif. The residue at position 377 (Thr-377) is a Phosphothreonine. Ser-379, Ser-382, Ser-385, Ser-386, and Ser-389 each carry phosphoserine. Residues 493 to 496 (KPFN) and 522 to 523 (HH) contribute to the a 1,2-diacyl-sn-glycero-3-phospho-(1D-myo-inositol 4-phosphate) site. The tract at residues 710-759 (TAPTDSRLRPDQRLMENGRWDEANAEKQRLEEKQRLSRKKREAEAMKATE) is disordered. Residues 715–759 (SRLRPDQRLMENGRWDEANAEKQRLEEKQRLSRKKREAEAMKATE) show a composition bias toward basic and acidic residues. Positions 730-760 (DEANAEKQRLEEKQRLSRKKREAEAMKATED) form a coiled coil.

Belongs to the OSBP family. Homodimer or homotrimer. Interacts (via FFAT motif) with VAPA. Interacts (via C-terminus) with RELCH (via the third HEAT repeat). Found in a complex composed of RELCH, OSBP1 and RAB11A. As to expression, widely expressed.

The protein localises to the cytoplasm. It localises to the cytosol. It is found in the perinuclear region. Its subcellular location is the golgi apparatus membrane. The protein resides in the endoplasmic reticulum membrane. The protein localises to the golgi apparatus. It localises to the trans-Golgi network. Lipid transporter involved in lipid countertransport between the Golgi complex and membranes of the endoplasmic reticulum: specifically exchanges sterol with phosphatidylinositol 4-phosphate (PI4P), delivering sterol to the Golgi in exchange for PI4P, which is degraded by the SAC1/SACM1L phosphatase in the endoplasmic reticulum. Binds cholesterol and a range of oxysterols including 25-hydroxycholesterol. Cholesterol binding promotes the formation of a complex with PP2A and a tyrosine phosphatase which dephosphorylates ERK1/2, whereas 25-hydroxycholesterol causes its disassembly. Regulates cholesterol efflux by decreasing ABCA1 stability. In Homo sapiens (Human), this protein is Oxysterol-binding protein 1.